The sequence spans 1170 residues: DNA excision repair protein ERCC-5 (1170 aa).

Positions 1–78 (MGVQGLWKLL…RIRPIFVFDG (78 aa)) are N-domain. Lys8 is subject to N6-acetyllysine. Asp30 contacts Mg(2+). The segment at 31–67 (ISIWLNQALKGVRDSHGNVIENAHLLTLFHRLCKLLF) is DNA-binding; may bind to the undamaged single-strand DNA of the DNA repair bubble. Asp77 serves as a coordination point for Mg(2+). Positions 79-784 (DAPLLKKQTL…LRLFGVPYIQ (706 aa)) are spacer region. Disordered regions lie at residues 304 to 479 (DSES…RCDT), 520 to 587 (HVSG…PKAC), and 600 to 701 (LENA…ECLL). The span at 306–323 (ESLPSSSNVHSVSSNLKS) shows a compositional bias: low complexity. Composition is skewed to basic and acidic residues over residues 324-336 (SPHEKVKPEREPE) and 363-373 (SREGRQSKERN). Phosphoserine is present on Ser384. The span at 455–474 (TSGSSANGQTDSAHSFTTAS) shows a compositional bias: polar residues. A compositionally biased stretch (basic and acidic residues) spans 539-551 (THSDQGIDIHPED). Polar residues predominate over residues 659-676 (SVVSNSELQTESSEASTH). The segment covering 677 to 698 (LSEKDAEEPRETLEEGTSRDTE) has biased composition (basic and acidic residues). 2 positions are modified to phosphoserine: Ser704 and Ser705. The tract at residues 785 to 880 (APMEAEAQCA…VTAMEILNEF (96 aa)) is I-domain. Residues Glu788, Glu790, Asp809, and Asp811 each contribute to the Mg(2+) site. A DNA-binding; may bind to the undamaged single-strand DNA of the DNA repair bubble region spans residues 819–835 (HVYKNFFNKNKFVEYYQ). The tract at residues 847–879 (RNKLINLAYLLGSDYTEGIPTVGCVTAMEILNE) is DNA-binding; H2TH (helix-2turn-helix) motif which binds double-stranded DNA. Mg(2+) is bound at residue Asp860. The interval 911–917 (TKVKKKL) is DNA-binding; may bind double-stranded DNA. Residues 980-1008 (LKHLNAHQTQLRIDSFFRLAQQEKQDAKL) are interaction with PCNA. The tract at residues 1010–1170 (KSHRLNRAVT…KSMKRRKKKT (161 aa)) is interaction with ERCC6/CSB. The disordered stretch occupies residues 1033–1146 (LTKVTEALDD…DDEDKAKTVL (114 aa)). Positions 1041 to 1060 (DDAKGKTQKRELPYKKETSV) are enriched in basic and acidic residues. A Nuclear localization signal 1 motif is present at residues 1049 to 1065 (KRELPYKKETSVPKRRR). Over residues 1094–1110 (SVMSARQRSAAESSKIS) the composition is skewed to polar residues. A Nuclear localization signal 2 motif is present at residues 1153–1170 (FGKKKLKLKSMKRRKKKT).

It belongs to the XPG/RAD2 endonuclease family. XPG subfamily. As to quaternary structure, monomer. Homodimer. Component of the homologous recombination repair (HR) complex composed of ERCC5/XPG, BRCA2, PALB2, DSS1 and RAD51. Within the complex, interacts with BRCA2 and PALB2. Interacts with RNA polymerase II. Interacts (via C-terminus) with ERCC6/CSB; the interaction stimulates ERCC6/CSB binding to the DNA repair bubble and ERCC6/CSB ATPase activity. May form a complex composed of RNA polymerase II, ERCC6/CSB and ERCC5/XPG which associates with the DNA repair bubble during transcription-coupled nucleotide excision repair. Interacts with BRCA1; the interaction promotes the release of BRCA1 from DNA. Interacts with PCNA. Interacts with NTHL1; the interaction stimulates NTHL1 activity and NTHL1 binding to its DNA substrate. The cofactor is Mg(2+).

The protein localises to the nucleus. It localises to the chromosome. Its function is as follows. Single-stranded structure-specific DNA endonuclease involved in DNA excision repair. Makes the 3'incision in DNA nucleotide excision repair (NER). Binds and bends DNA repair bubble substrate and breaks base stacking at the single-strand/double-strand DNA junction of the DNA bubble. Plays a role in base excision repair (BER) by promoting the binding of DNA glycosylase NTHL1 to its substrate and increasing NTHL1 catalytic activity that removes oxidized pyrimidines from DNA. Involved in transcription-coupled nucleotide excision repair (TCR) which allows RNA polymerase II-blocking lesions to be rapidly removed from the transcribed strand of active genes. Functions during the initial step of TCR in cooperation with ERCC6/CSB to recognized stalled RNA polymerase II. Also, stimulates ERCC6/CSB binding to the DNA repair bubble and ERCC6/CSB ATPase activity. Required for DNA replication fork maintenance and preservation of genomic stability. Involved in homologous recombination repair (HRR) induced by DNA replication stress by recruiting RAD51, BRCA2, and PALB2 to the damaged DNA site. During HRR, binds to the replication fork with high specificity and stabilizes it. Also, acts upstream of HRR, to promote the release of BRCA1 from DNA. The polypeptide is DNA excision repair protein ERCC-5 (Ercc5) (Mus musculus (Mouse)).